The following is a 243-amino-acid chain: MELDILYRDDELIAINKPAGMLVHRSWLDKAETLFAMQTLRDQINQHVFPIHRLDRPTSGVLLFALNSEMARLMSEQFEQHKVEKEYLAIVRGYIAEKGEIDYPLKVILDKIADKFSQPKAAQQAVTFYQNLAKVEMPYSTGKYATTRYSLVALSPKTGRKHQLRRHMKHLFHPIMGDTKYGDLHQNRRLTEKTGCNRLMLHARLLHFTHPKTLQKITISALLDQQWQMLFNQFGWHFTDFFY.

D55 is a catalytic residue.

The protein belongs to the pseudouridine synthase RluA family.

The enzyme catalyses uridine(65) in tRNA = pseudouridine(65) in tRNA. In terms of biological role, responsible for synthesis of pseudouridine from uracil-65 in transfer RNAs. This Haemophilus ducreyi (strain 35000HP / ATCC 700724) protein is tRNA pseudouridine synthase C (truC).